A 433-amino-acid chain; its full sequence is Adenylosuccinate synthetase (433 aa).

Residues 12-18 (GDEGKGK) and 40-42 (GHT) each bind GTP. The Proton acceptor role is filled by Asp13. Asp13 and Gly40 together coordinate Mg(2+). Residues 13–16 (DEGK), 38–41 (NAGH), Thr130, Arg144, Gln225, Thr240, and Arg304 contribute to the IMP site. The active-site Proton donor is His41. Residue 300–306 (ATTGRPR) coordinates substrate. GTP-binding positions include Arg306, 332-334 (KLD), and 414-416 (SIG).

It belongs to the adenylosuccinate synthetase family. Homodimer. The cofactor is Mg(2+).

It localises to the cytoplasm. It carries out the reaction IMP + L-aspartate + GTP = N(6)-(1,2-dicarboxyethyl)-AMP + GDP + phosphate + 2 H(+). It functions in the pathway purine metabolism; AMP biosynthesis via de novo pathway; AMP from IMP: step 1/2. In terms of biological role, plays an important role in the de novo pathway of purine nucleotide biosynthesis. Catalyzes the first committed step in the biosynthesis of AMP from IMP. The chain is Adenylosuccinate synthetase from Geobacter sulfurreducens (strain ATCC 51573 / DSM 12127 / PCA).